Reading from the N-terminus, the 327-residue chain is Glycerol-3-phosphate dehydrogenase [NAD(P)+] (327 aa).

Tryptophan 11, histidine 30, and lysine 103 together coordinate NADPH. Residues lysine 103, glycine 131, and serine 133 each contribute to the sn-glycerol 3-phosphate site. Alanine 135 provides a ligand contact to NADPH. Sn-glycerol 3-phosphate-binding residues include lysine 186, aspartate 243, serine 253, arginine 254, and asparagine 255. Residue lysine 186 is the Proton acceptor of the active site. Arginine 254 is an NADPH binding site. NADPH contacts are provided by valine 281 and glutamate 283.

It belongs to the NAD-dependent glycerol-3-phosphate dehydrogenase family.

It is found in the cytoplasm. The enzyme catalyses sn-glycerol 3-phosphate + NAD(+) = dihydroxyacetone phosphate + NADH + H(+). The catalysed reaction is sn-glycerol 3-phosphate + NADP(+) = dihydroxyacetone phosphate + NADPH + H(+). It participates in membrane lipid metabolism; glycerophospholipid metabolism. Functionally, catalyzes the reduction of the glycolytic intermediate dihydroxyacetone phosphate (DHAP) to sn-glycerol 3-phosphate (G3P), the key precursor for phospholipid synthesis. This is Glycerol-3-phosphate dehydrogenase [NAD(P)+] from Wolbachia pipientis wMel.